We begin with the raw amino-acid sequence, 504 residues long: Cytochrome P450 monooxygenase iccC (504 aa).

Residues leucine 7–serine 26 form a helical membrane-spanning segment. N-linked (GlcNAc...) asparagine glycans are attached at residues asparagine 134, asparagine 312, asparagine 365, and asparagine 374. Cysteine 452 is a heme binding site. An N-linked (GlcNAc...) asparagine glycan is attached at asparagine 494.

This sequence belongs to the cytochrome P450 family. Heme serves as cofactor.

The protein resides in the membrane. The enzyme catalyses (3E,5S)-3-[(2E,4E,8S,10E,12Z)-1-hydroxy-4,8-dimethyltetradeca-2,4,10,12-tetraen-1-ylidene]-5-[(4-hydroxyphenyl)methyl]pyrrolidine-2,4-dione + reduced [NADPH--hemoprotein reductase] + O2 = 3-[(2E,4E,8S,10E,12Z)-4,8-dimethyltetradeca-2,4,10,12-tetraenoyl]-4-hydroxy-5-(4-hydroxyphenyl)-1,2-dihydropyridin-2-one + oxidized [NADPH--hemoprotein reductase] + 2 H2O. The protein operates within mycotoxin biosynthesis. Cytochrome P450 monooxygenase; part of the gene cluster that mediates the biosynthesis of ilicicolin H, a 4-hydroxy-2-pyridonealkaloid that has potent and broad antifungal activities by inhibiting the mitochondrial respiration chain. IccC catalyzes the ring expansion of the tetramate intermediate to the acyclic 2-pyridone intermediate that contains the trans bis-diene chain. The biosynthesis of ilicicolin H starts with formation of the tetramic acid by the hybrid PKS-NRPS synthetase iccA with the partnering trans-enoyl reductase iccB since iccA lacks a designated enoylreductase (ER) domain. The cytochrome P450 monooxygenase iccC then catalyzes the ring expansion of the tetramate to the acyclic 2-pyridone. The pericyclase iccD further converts the acyclic 2-pyridone into 8-epi-ilicicolin H. Finally, the epimerase iccE converts 8-epi-ilicicolin H into ilicicolin H via epimerization. IccA to iccE are sufficient for ilicicolin H biosynthesis and the roles of the remaining enzymes, iccF, iccG and iccH within the pathway have still to be determined. This is Cytochrome P450 monooxygenase iccC from Talaromyces variabilis (Penicillium variabile).